Here is a 1043-residue protein sequence, read N- to C-terminus: Rho GTPase-activating protein gacZ (1043 aa).

Residues 1–44 form a disordered region; the sequence is MTTTNTSIFGPRVNNSKFNNNNNNNNNNNNNNNNTSNNNNSNII. The segment covering 14-44 has biased composition (low complexity); that stretch reads NNSKFNNNNNNNNNNNNNNNNTSNNNNSNII. Residues C71, C74, C82, C85, C91, H95, H103, and C107 each contribute to the Zn(2+) site. The MYND-type; atypical zinc finger occupies 71–107; that stretch reads CVICKSKNVQVCTGCLMVYYCGAEHQNIDWPNHKSLC. 6 disordered regions span residues 137-163, 199-532, 546-594, 614-690, 706-772, and 801-842; these read SGNRVSNSNNNSSIYSNSTGNINNNNN, HLQQ…NNSN, DGLS…NGNR, FYQS…TNNN, NTSQ…QLSA, and NKVS…NNNN. The span at 201-225 shows a compositional bias: low complexity; it reads QQQIQQTQQTQQQPPPTTTSIPTQP. Residues 241–253 are compositionally biased toward polar residues; sequence SFKSSSSGDNTPI. 2 stretches are compositionally biased toward low complexity: residues 254–293 and 307–411; these read NQSPSSSSSSLVSSTNNNNNNNNNNNNNNNINSNSNNMSG and NSIN…TNEE. Over residues 453–466 the composition is skewed to polar residues; it reads GTLKQSSSSDSIYF. Composition is skewed to low complexity over residues 467–532 and 547–594; these read NNNN…NNSN and GLSY…NGNR. The span at 615–625 shows a compositional bias: polar residues; the sequence is YQSNKNQSNGY. The span at 644-671 shows a compositional bias: acidic residues; the sequence is ENDDSHEECDDDDDDDDGGGQDGDDGLD. Low complexity-rich tracts occupy residues 726–736, 752–771, 801–821, and 829–842; these read DTQSQSTNSTT, SSDDLQQQQTQTQQQQSQLS, NKVSEVTSKSKSSTSVNNNNN, and NNNNNNNNINNNNN. A coiled-coil region spans residues 825-852; the sequence is DHNENNNNNNNNINNNNNNNNNNIENII. The region spanning 855–1043 is the Rho-GAP domain; the sequence is IPLEEAVKKS…FGIQTYNYNS (189 aa).

It localises to the cytoplasm. Its function is as follows. Rho GTPase-activating protein involved in the signal transduction pathway. This is Rho GTPase-activating protein gacZ (gacZ) from Dictyostelium discoideum (Social amoeba).